The primary structure comprises 358 residues: MINLFLYCRSGYEKECAAEIQHRAAELEIGGFVKTNKKDGYVIFQCFQAGDANILAQKIKLDSLIFARQMFAAKELLKNLPEHDRITPIMEALSDVRNAGELRVETPDTNEAKERTAFCRKFTVPLRQKLKNAGNLLKKENSSRPIIHVCFVASGTAYVGFSFSNNSSPYPMGIPRLKMASDAPSRSTLKLDEAFIHFIPEEEQEQRLSSGMNAVDLGACPGGWTYQLVRRGMFVAAVDNGPMDEGLMETGQVKHYQADGFRFEPPRKNIYWLVCDMIEKPSRVAELIEAWAINGWFKEAMFNLKLPMKSRYQDVSTILETMATVLEENEIKNFSIKCKHLYHDRDEVTVYLSLNPTQ.

S-adenosyl-L-methionine is bound by residues Ser-187, 220 to 223 (CPGG), Asp-239, Asp-259, and Asp-276. Lys-305 functions as the Proton acceptor in the catalytic mechanism.

This sequence belongs to the class I-like SAM-binding methyltransferase superfamily. RNA methyltransferase RlmE family. RlmM subfamily. As to quaternary structure, monomer.

Its subcellular location is the cytoplasm. It carries out the reaction cytidine(2498) in 23S rRNA + S-adenosyl-L-methionine = 2'-O-methylcytidine(2498) in 23S rRNA + S-adenosyl-L-homocysteine + H(+). In terms of biological role, catalyzes the 2'-O-methylation at nucleotide C2498 in 23S rRNA. The protein is Ribosomal RNA large subunit methyltransferase M of Shewanella woodyi (strain ATCC 51908 / MS32).